The primary structure comprises 34 residues: VATVQGLSGTGSLRNLGLYAERQIGMFSFTGLNK.

This sequence belongs to the class-I pyridoxal-phosphate-dependent aminotransferase family. Homodimer. The cofactor is pyridoxal 5'-phosphate.

It catalyses the reaction L-aspartate + 2-oxoglutarate = oxaloacetate + L-glutamate. Functionally, important for the metabolism of amino acids and Krebs-cycle related organic acids. In plants, it is involved in nitrogen metabolism and in aspects of carbon and energy metabolism. The polypeptide is Aspartate aminotransferase 2 (Pseudotsuga menziesii (Douglas-fir)).